A 315-amino-acid chain; its full sequence is Calcium homeostasis modulator protein 6 (315 aa).

The Cytoplasmic segment spans residues 1-21 (MEKFKAVLDLQIKHRSALGYG). The helical transmembrane segment at 22–37 (LVTLLTAGGEKIFSTV) threads the bilayer. Residues 38-46 (VFQCPCTAT) are Extracellular-facing. Intrachain disulfides connect cysteine 41–cysteine 127, cysteine 43–cysteine 156, and cysteine 140–cysteine 147. Residues 47-68 (LNLTYGLVFLLVPALALFLLGY) form a helical membrane-spanning segment. Over 69 to 103 (ALSARTWRLLTGCCSRSASTRSSSGLRSTLVCAQV) the chain is Cytoplasmic. Residues 104 to 128 (SAVAALAPLTWVAVALLGGSFYQCA) traverse the membrane as a helical segment. Topologically, residues 129 to 169 (VSGSTRLASYLCKDRNHSCIAKLPQVPCNKQEAEMQEILSQ) are extracellular. Residues 170–192 (LKAQSQVLGWVLIAAVIFLLLVF) form a helical membrane-spanning segment. Residues 193-315 (KCVSRCFSPV…DAAMANTHGV (123 aa)) lie on the Cytoplasmic side of the membrane.

Belongs to the CALHM family. As to quaternary structure, oligomerizes to form decameric and undecameric channels.

The protein localises to the cell membrane. The catalysed reaction is ATP(in) = ATP(out). Its function is as follows. Pore-forming subunit of an ATP-permeable channel. In response to pathogen-derived and proinflammatory stimuli, relocates from intracellular compartments to NK-dendritic cell and NK-macrophage immune synapses where it mediates ATP efflux and NK cell activation involved in antimicrobial and antitumor responses. May assemble to form gap junction channel-like structures with gating and ion conductance likely regulated by membrane lipids and voltage rather than by extracellular calcium levels. The protein is Calcium homeostasis modulator protein 6 of Rattus norvegicus (Rat).